Reading from the N-terminus, the 107-residue chain is METLDKIKKQISENPILIYMKGSPKLPSCGFSARASEALMHCKVPFGYVDILQHPDIRAELPTYANWPTFPQLWVEGELIGGCDIILEMYQAGELQTLLAEVAAKHA.

The 103-residue stretch at 4–106 (LDKIKKQISE…TLLAEVAAKH (103 aa)) folds into the Glutaredoxin domain. Lysine 21 is a binding site for glutathione. [2Fe-2S] cluster is bound at residue cysteine 29. Glutathione-binding positions include arginine 58, phenylalanine 70, and 83–84 (CD).

It belongs to the glutaredoxin family. Monothiol subfamily. Homodimer.

It localises to the cytoplasm. Monothiol glutaredoxin involved in the biogenesis of iron-sulfur clusters. The sequence is that of Glutaredoxin 4 (grxD) from Haemophilus influenzae (strain 86-028NP).